A 171-amino-acid polypeptide reads, in one-letter code: Ribosome maturation factor RimM (171 aa).

Positions 98–170 (EGEFYLHQII…AVQVSVPEGL (73 aa)) constitute a PRC barrel domain.

The protein belongs to the RimM family. In terms of assembly, binds ribosomal protein uS19.

The protein resides in the cytoplasm. Its function is as follows. An accessory protein needed during the final step in the assembly of 30S ribosomal subunit, possibly for assembly of the head region. Essential for efficient processing of 16S rRNA. May be needed both before and after RbfA during the maturation of 16S rRNA. It has affinity for free ribosomal 30S subunits but not for 70S ribosomes. The sequence is that of Ribosome maturation factor RimM from Pediococcus pentosaceus (strain ATCC 25745 / CCUG 21536 / LMG 10740 / 183-1w).